Consider the following 323-residue polypeptide: tRNA U34 carboxymethyltransferase (323 aa).

Carboxy-S-adenosyl-L-methionine contacts are provided by residues lysine 91, tryptophan 105, lysine 110, glycine 130, 152–154, 181–182, methionine 196, tyrosine 200, and arginine 315; these read DPS and IE.

This sequence belongs to the class I-like SAM-binding methyltransferase superfamily. CmoB family. In terms of assembly, homotetramer.

It catalyses the reaction carboxy-S-adenosyl-L-methionine + 5-hydroxyuridine(34) in tRNA = 5-carboxymethoxyuridine(34) in tRNA + S-adenosyl-L-homocysteine + H(+). Catalyzes carboxymethyl transfer from carboxy-S-adenosyl-L-methionine (Cx-SAM) to 5-hydroxyuridine (ho5U) to form 5-carboxymethoxyuridine (cmo5U) at position 34 in tRNAs. The protein is tRNA U34 carboxymethyltransferase of Vibrio cholerae serotype O1 (strain ATCC 39541 / Classical Ogawa 395 / O395).